The chain runs to 182 residues: Large ribosomal subunit protein uL5 (182 aa).

The protein belongs to the universal ribosomal protein uL5 family. Part of the 50S ribosomal subunit; part of the 5S rRNA/L5/L18/L25 subcomplex. Contacts the 5S rRNA and the P site tRNA. Forms a bridge to the 30S subunit in the 70S ribosome.

In terms of biological role, this is one of the proteins that bind and probably mediate the attachment of the 5S RNA into the large ribosomal subunit, where it forms part of the central protuberance. In the 70S ribosome it contacts protein S13 of the 30S subunit (bridge B1b), connecting the 2 subunits; this bridge is implicated in subunit movement. Contacts the P site tRNA; the 5S rRNA and some of its associated proteins might help stabilize positioning of ribosome-bound tRNAs. The protein is Large ribosomal subunit protein uL5 of Leptospira interrogans serogroup Icterohaemorrhagiae serovar copenhageni (strain Fiocruz L1-130).